Consider the following 660-residue polypeptide: Bifunctional polymyxin resistance protein ArnA (660 aa).

Residues 1–304 (MKTVVFAYHD…MLGLVQGSRL (304 aa)) are formyltransferase ArnAFT. 86 to 88 (HLI) contributes to the (6R)-10-formyltetrahydrofolate binding site. Residue histidine 104 is the Proton donor; for formyltransferase activity of the active site. Residues arginine 114 and 136 to 140 (VKRAD) each bind (6R)-10-formyltetrahydrofolate. Residues 314–660 (RRTRVLILGV…RTVDLTDKPS (347 aa)) form a dehydrogenase ArnADH region. NAD(+)-binding positions include aspartate 347 and 368 to 369 (DI). UDP-alpha-D-glucuronate-binding positions include alanine 393, tyrosine 398, and 432-433 (TS). The Proton acceptor; for decarboxylase activity role is filled by glutamate 434. Residues arginine 460, asparagine 492, 526 to 535 (KLIDGGKQKR), and tyrosine 613 contribute to the UDP-alpha-D-glucuronate site. Catalysis depends on arginine 619, which acts as the Proton donor; for decarboxylase activity.

The protein in the N-terminal section; belongs to the Fmt family. UDP-L-Ara4N formyltransferase subfamily. It in the C-terminal section; belongs to the NAD(P)-dependent epimerase/dehydratase family. UDP-glucuronic acid decarboxylase subfamily. Homohexamer, formed by a dimer of trimers.

The enzyme catalyses UDP-alpha-D-glucuronate + NAD(+) = UDP-beta-L-threo-pentopyranos-4-ulose + CO2 + NADH. It carries out the reaction UDP-4-amino-4-deoxy-beta-L-arabinose + (6R)-10-formyltetrahydrofolate = UDP-4-deoxy-4-formamido-beta-L-arabinose + (6S)-5,6,7,8-tetrahydrofolate + H(+). Its pathway is nucleotide-sugar biosynthesis; UDP-4-deoxy-4-formamido-beta-L-arabinose biosynthesis; UDP-4-deoxy-4-formamido-beta-L-arabinose from UDP-alpha-D-glucuronate: step 1/3. It participates in nucleotide-sugar biosynthesis; UDP-4-deoxy-4-formamido-beta-L-arabinose biosynthesis; UDP-4-deoxy-4-formamido-beta-L-arabinose from UDP-alpha-D-glucuronate: step 3/3. It functions in the pathway bacterial outer membrane biogenesis; lipopolysaccharide biosynthesis. Functionally, bifunctional enzyme that catalyzes the oxidative decarboxylation of UDP-glucuronic acid (UDP-GlcUA) to UDP-4-keto-arabinose (UDP-Ara4O) and the addition of a formyl group to UDP-4-amino-4-deoxy-L-arabinose (UDP-L-Ara4N) to form UDP-L-4-formamido-arabinose (UDP-L-Ara4FN). The modified arabinose is attached to lipid A and is required for resistance to polymyxin and cationic antimicrobial peptides. The protein is Bifunctional polymyxin resistance protein ArnA of Shigella sonnei (strain Ss046).